Reading from the N-terminus, the 398-residue chain is Tyrosine--tRNA ligase (398 aa).

The 'HIGH' region signature appears at 48–57 (PTGADIHLGH). Positions 235–239 (KMSKS) match the 'KMSKS' region motif. ATP is bound at residue lysine 238. An S4 RNA-binding domain is found at 334–398 (VKLAYLLGAT…GKNKFMRLVP (65 aa)).

This sequence belongs to the class-I aminoacyl-tRNA synthetase family. TyrS type 2 subfamily. Homodimer.

Its subcellular location is the cytoplasm. The enzyme catalyses tRNA(Tyr) + L-tyrosine + ATP = L-tyrosyl-tRNA(Tyr) + AMP + diphosphate + H(+). Its function is as follows. Catalyzes the attachment of tyrosine to tRNA(Tyr) in a two-step reaction: tyrosine is first activated by ATP to form Tyr-AMP and then transferred to the acceptor end of tRNA(Tyr). This chain is Tyrosine--tRNA ligase, found in Nostoc sp. (strain PCC 7120 / SAG 25.82 / UTEX 2576).